The following is a 507-amino-acid chain: Keratin, type II cuticular Hb5 (507 aa).

The interval 1–123 is head; sequence MSCRSYRISP…PNAQCVKYEE (123 aa). The 312-residue stretch at 123 to 434 folds into the IF rod domain; sequence EKEQIKCLNS…RLLEGEEQRL (312 aa). The coil 1A stretch occupies residues 124 to 158; sequence KEQIKCLNSKFAAFIDKVRFLEQQNKLLETKWQFY. A linker 1 region spans residues 159–168; the sequence is QNRKCCESNL. Positions 169 to 269 are coil 1B; sequence EPLFGGYIEA…YEEEVCVLQA (101 aa). Residue K229 forms a Glycyl lysine isopeptide (Lys-Gly) (interchain with G-Cter in SUMO1) linkage. Residues 270-286 are linker 12; the sequence is HISDTSVIVKMDNSRDL. The segment at 287 to 430 is coil 2; sequence NMDCVVAEIK…ATYRRLLEGE (144 aa). The tract at residues 431 to 507 is tail; the sequence is EQRLCEGVGS…CGSSRSVRFA (77 aa).

Belongs to the intermediate filament family. Heterotetramer of two type I and two type II keratins.

The polypeptide is Keratin, type II cuticular Hb5 (Krt85) (Mus musculus (Mouse)).